We begin with the raw amino-acid sequence, 72 residues long: Translation initiation factor IF-1 (72 aa).

The S1-like domain occupies 2–72; the sequence is AKDDVIEVEG…TRGRITYRYK (71 aa). Tyrosine 60 is subject to Phosphotyrosine.

Belongs to the IF-1 family. As to quaternary structure, component of the 30S ribosomal translation pre-initiation complex which assembles on the 30S ribosome in the order IF-2 and IF-3, IF-1 and N-formylmethionyl-tRNA(fMet); mRNA recruitment can occur at any time during PIC assembly.

The protein localises to the cytoplasm. In terms of biological role, one of the essential components for the initiation of protein synthesis. Stabilizes the binding of IF-2 and IF-3 on the 30S subunit to which N-formylmethionyl-tRNA(fMet) subsequently binds. Helps modulate mRNA selection, yielding the 30S pre-initiation complex (PIC). Upon addition of the 50S ribosomal subunit IF-1, IF-2 and IF-3 are released leaving the mature 70S translation initiation complex. The chain is Translation initiation factor IF-1 from Bacillus subtilis (strain 168).